Here is a 447-residue protein sequence, read N- to C-terminus: Cobyrinate a,c-diamide synthase (447 aa).

In terms of domain architecture, GATase cobBQ-type spans 252–439 (KIAVAFDESF…AHQHCIGNPY (188 aa)). Cysteine 331 functions as the Nucleophile in the catalytic mechanism.

It belongs to the CobB/CbiA family. It depends on Mg(2+) as a cofactor.

The enzyme catalyses cob(II)yrinate + 2 L-glutamine + 2 ATP + 2 H2O = cob(II)yrinate a,c diamide + 2 L-glutamate + 2 ADP + 2 phosphate + 2 H(+). It carries out the reaction Ni-sirohydrochlorin + 2 L-glutamine + 2 ATP + 2 H2O = Ni-sirohydrochlorin a,c-diamide + 2 L-glutamate + 2 ADP + 2 phosphate + 2 H(+). The protein operates within cofactor biosynthesis; adenosylcobalamin biosynthesis; cob(II)yrinate a,c-diamide from sirohydrochlorin (anaerobic route): step 10/10. Its function is as follows. Catalyzes the ATP-dependent amidation of the two carboxylate groups at positions a and c of cobyrinate, using either L-glutamine or ammonia as the nitrogen source. Involved in the biosynthesis of the unique nickel-containing tetrapyrrole coenzyme F430, the prosthetic group of methyl-coenzyme M reductase (MCR), which plays a key role in methanogenesis and anaerobic methane oxidation. Catalyzes the ATP-dependent amidation of the two carboxylate groups at positions a and c of Ni-sirohydrochlorin, using L-glutamine or ammonia as the nitrogen source. This chain is Cobyrinate a,c-diamide synthase, found in Methanococcus maripaludis (strain C5 / ATCC BAA-1333).